Here is a 465-residue protein sequence, read N- to C-terminus: UDP-N-acetylmuramoylalanine--D-glutamate ligase (465 aa).

Residue 112-118 (GTDGKTT) coordinates ATP.

It belongs to the MurCDEF family.

The protein localises to the cytoplasm. The enzyme catalyses UDP-N-acetyl-alpha-D-muramoyl-L-alanine + D-glutamate + ATP = UDP-N-acetyl-alpha-D-muramoyl-L-alanyl-D-glutamate + ADP + phosphate + H(+). It participates in cell wall biogenesis; peptidoglycan biosynthesis. Cell wall formation. Catalyzes the addition of glutamate to the nucleotide precursor UDP-N-acetylmuramoyl-L-alanine (UMA). The polypeptide is UDP-N-acetylmuramoylalanine--D-glutamate ligase (Chlorobium limicola (strain DSM 245 / NBRC 103803 / 6330)).